Reading from the N-terminus, the 490-residue chain is GTPase Der (490 aa).

EngA-type G domains follow at residues 3 to 166 (PVVA…MEDL) and 203 to 376 (IKLA…DSST). GTP is bound by residues 9–16 (GRPNVGKS), 56–60 (DTGGI), 118–121 (NKID), 209–216 (GRPNVGKS), 256–260 (DTAGV), and 321–324 (NKWD). The 85-residue stretch at 377 to 461 (RRVGTSMLTR…PIRIQFKEGE (85 aa)) folds into the KH-like domain.

It belongs to the TRAFAC class TrmE-Era-EngA-EngB-Septin-like GTPase superfamily. EngA (Der) GTPase family. In terms of assembly, associates with the 50S ribosomal subunit.

Functionally, GTPase that plays an essential role in the late steps of ribosome biogenesis. In Shigella boydii serotype 18 (strain CDC 3083-94 / BS512), this protein is GTPase Der.